The primary structure comprises 107 residues: Ribonuclease P protein component 4 (107 aa).

C66, C69, C92, and C95 together coordinate Zn(2+).

The protein belongs to the eukaryotic/archaeal RNase P protein component 4 family. Consists of a catalytic RNA component and at least 4-5 protein subunits. Zn(2+) serves as cofactor.

It localises to the cytoplasm. The catalysed reaction is Endonucleolytic cleavage of RNA, removing 5'-extranucleotides from tRNA precursor.. Functionally, part of ribonuclease P, a protein complex that generates mature tRNA molecules by cleaving their 5'-ends. The polypeptide is Ribonuclease P protein component 4 (Methanosarcina mazei (strain ATCC BAA-159 / DSM 3647 / Goe1 / Go1 / JCM 11833 / OCM 88) (Methanosarcina frisia)).